A 362-amino-acid polypeptide reads, in one-letter code: Molybdenum import ATP-binding protein ModC (362 aa).

The 236-residue stretch at 1-236 (MTASGLYLNL…TQSPTAQGED (236 aa)) folds into the ABC transporter domain. 36–43 (GPSGSGKT) is an ATP binding site. Residues 297–362 (DSTILNKLAA…AQVKSVAIVG (66 aa)) enclose the Mop domain.

Belongs to the ABC transporter superfamily. Molybdate importer (TC 3.A.1.8) family. As to quaternary structure, the complex is composed of two ATP-binding proteins (ModC), two transmembrane proteins (ModB) and a solute-binding protein (ModA).

Its subcellular location is the cell inner membrane. The enzyme catalyses molybdate(out) + ATP + H2O = molybdate(in) + ADP + phosphate + H(+). Its function is as follows. Part of the ABC transporter complex ModABC involved in molybdenum import. Responsible for energy coupling to the transport system. This chain is Molybdenum import ATP-binding protein ModC, found in Saccharophagus degradans (strain 2-40 / ATCC 43961 / DSM 17024).